The chain runs to 257 residues: Diacetyl reductase [(S)-acetoin forming] (257 aa).

Position 6–30 (6–30) interacts with NAD(+); that stretch reads IITGAAGGLGKGIAERLANDGFNIV. Position 139 (Ser139) interacts with substrate. The Proton acceptor role is filled by Tyr152. The active site involves Lys156.

The protein belongs to the short-chain dehydrogenases/reductases (SDR) family.

It carries out the reaction (S)-acetoin + NAD(+) = diacetyl + NADH + H(+). In terms of biological role, catalyzes the irreversible reduction of 2,3-butanediol to (S)-acetoin in the presence of NADH. In Staphylococcus epidermidis (strain ATCC 12228 / FDA PCI 1200), this protein is Diacetyl reductase [(S)-acetoin forming] (butA).